The primary structure comprises 54 residues: ATP synthase protein 8 (54 aa).

Residues W8–V28 form a helical membrane-spanning segment.

It belongs to the ATPase protein 8 family. In terms of assembly, F-type ATPases have 2 components, CF(1) - the catalytic core - and CF(0) - the membrane proton channel.

Its subcellular location is the mitochondrion membrane. Functionally, mitochondrial membrane ATP synthase (F(1)F(0) ATP synthase or Complex V) produces ATP from ADP in the presence of a proton gradient across the membrane which is generated by electron transport complexes of the respiratory chain. F-type ATPases consist of two structural domains, F(1) - containing the extramembraneous catalytic core and F(0) - containing the membrane proton channel, linked together by a central stalk and a peripheral stalk. During catalysis, ATP synthesis in the catalytic domain of F(1) is coupled via a rotary mechanism of the central stalk subunits to proton translocation. Part of the complex F(0) domain. Minor subunit located with subunit a in the membrane. The chain is ATP synthase protein 8 (MT-ATP8) from Paracentrotus lividus (Common sea urchin).